A 607-amino-acid chain; its full sequence is Lipid-A-disaccharide synthase (607 aa).

The tract at residues 1–224 (MFPQKITLWL…ASREAFRKPF (224 aa)) is unknown. Residues 225–607 (SNSCFISAGE…CLSLIFETAS (383 aa)) form a lipid-A-disaccharide synthase region.

The protein in the C-terminal section; belongs to the LpxB family.

It carries out the reaction a lipid X + a UDP-2-N,3-O-bis[(3R)-3-hydroxyacyl]-alpha-D-glucosamine = a lipid A disaccharide + UDP + H(+). It functions in the pathway bacterial outer membrane biogenesis; LPS lipid A biosynthesis. In terms of biological role, condensation of UDP-2,3-diacylglucosamine and 2,3-diacylglucosamine-1-phosphate to form lipid A disaccharide, a precursor of lipid A, a phosphorylated glycolipid that anchors the lipopolysaccharide to the outer membrane of the cell. This is Lipid-A-disaccharide synthase (lpxB) from Chlamydia trachomatis serovar A (strain ATCC VR-571B / DSM 19440 / HAR-13).